The following is a 299-amino-acid chain: MATFPASLLILNGKGADNQPLRDAIGLLRDEGVEIHVRVTWEKGDAQRYVDEARQLGVETVIAGGGDGTINEVSAALIQCQGGNVPALGILPLGTANDFATSAGIPEALDKALKLAIAGNAVAIDIAQVNDKTCFINMATGGFGTRITTETPEKLKAALGGVSYFIHGLMRMDTLKPDRCEIRGENFHWQGDALVIGIGNGRQAGGGQQLCPGALINDGLLQLRIFTGEELLPALFSTLTQPEENPNIVDGASAWFDIQAPHEITFNLDGEPLSGQEFHIEILPNALRCRLPPDCPLLR.

One can recognise a DAGKc domain in the interval Ala2–Thr133. Residues Thr40, Gly66–Glu72, and Thr95 contribute to the ATP site. Mg(2+) contacts are provided by Leu215, Asp218, and Leu220. The active-site Proton acceptor is Glu271.

The protein belongs to the diacylglycerol/lipid kinase family. YegS lipid kinase subfamily. Mg(2+) serves as cofactor. Ca(2+) is required as a cofactor.

Its subcellular location is the cytoplasm. In terms of biological role, probably phosphorylates lipids; the in vivo substrate is unknown. The sequence is that of Probable lipid kinase YegS-like from Citrobacter koseri (strain ATCC BAA-895 / CDC 4225-83 / SGSC4696).